A 265-amino-acid polypeptide reads, in one-letter code: HUWE1-associated protein modifying stress responses (265 aa).

Disordered regions lie at residues 1-22 (MEEK…HWFS), 140-173 (GKAP…SVET), and 194-219 (ISMR…RRNG). Residues 147–172 (SSRAPPRLAMVSPSRSTPSETSSSVE) show a composition bias toward low complexity.

It belongs to the HAPSTR1 family. Oligomer.

The protein localises to the nucleus. The protein resides in the cytoplasm. Its function is as follows. Acts as a central player within a network of stress response pathways promoting cellular adaptability. Functions as a negative regulator of TP53/P53 in the cellular response to telomere erosion and probably also DNA damage. In Danio rerio (Zebrafish), this protein is HUWE1-associated protein modifying stress responses.